The sequence spans 336 residues: UPF0104 membrane protein MJ1595 (336 aa).

Transmembrane regions (helical) follow at residues 9 to 29, 40 to 60, 68 to 88, 127 to 147, 154 to 174, 223 to 243, 245 to 265, 285 to 305, and 306 to 326; these read STIL…YIGL, NPEY…ILSA, ILGY…GLFI, VLDT…FVVT, YLIL…YLIA, WEVV…ILKL, LLFL…VYLI, VMIL…AVTL, and LDRL…MLII.

Belongs to the UPF0104 family.

The protein localises to the cell membrane. The protein is UPF0104 membrane protein MJ1595 of Methanocaldococcus jannaschii (strain ATCC 43067 / DSM 2661 / JAL-1 / JCM 10045 / NBRC 100440) (Methanococcus jannaschii).